The sequence spans 317 residues: Ribonuclease Z (317 aa).

Zn(2+)-binding residues include histidine 62, histidine 64, aspartate 66, histidine 67, histidine 139, aspartate 210, and histidine 268. The active-site Proton acceptor is the aspartate 66.

Belongs to the RNase Z family. In terms of assembly, homodimer. Zn(2+) serves as cofactor.

It catalyses the reaction Endonucleolytic cleavage of RNA, removing extra 3' nucleotides from tRNA precursor, generating 3' termini of tRNAs. A 3'-hydroxy group is left at the tRNA terminus and a 5'-phosphoryl group is left at the trailer molecule.. Its function is as follows. Zinc phosphodiesterase, which displays some tRNA 3'-processing endonuclease activity. Probably involved in tRNA maturation, by removing a 3'-trailer from precursor tRNA. The protein is Ribonuclease Z of Picosynechococcus sp. (strain ATCC 27264 / PCC 7002 / PR-6) (Agmenellum quadruplicatum).